We begin with the raw amino-acid sequence, 518 residues long: GRIN2-like protein (518 aa).

2 disordered regions span residues 1–23 and 467–500; these read MGLE…QSRT and QTEP…FRTM. The segment covering 476–494 has biased composition (basic and acidic residues); sequence KSDEDPLNKEPSSDKMEKK.

As to quaternary structure, may interact with GNAO1.

Functionally, may be involved in neurite outgrowth. In Gallus gallus (Chicken), this protein is GRIN2-like protein.